The sequence spans 434 residues: MTILVIGINHKTASVAIREKVAFSAEKRVEALAQIQQQALAESAVILSTCNRTEVYFHHKAIPPQEAESWTARCMQWFAEIHQLSLDALAGCLYSQQNQQAVLHLMRVACGLDSLVLGEPQILGQVKDAYQLSKMYYQGQNQPLSSEFSRLFQKTFSVAKRVRTETNIGGNAVSVAYGACSLARQIFDSLKTLNVLLVGAGETIELTCRHLLRHGVQRIMIANRTFERAQHLVTKLDGAENVQVLALTQLQEGLNQADIVISSTGSPTILITQDMVKIAQKARCDLPMLLVDIAVPRDIEESVGELDSIYHYTVDDLQTIIQRNLVEREKASAQAWVIIQQECADFFEWLKVHQFSNLIRSYRENAEDIRQILLEKALLALRQGEDSEAVLQALSYKLTNKLLHSPTQVMNAMVKTGNSTGLALFSSTLKSDVE.

Residues 49–52 (TCNR), S114, 119–121 (EPQ), and Q125 contribute to the substrate site. Residue C50 is the Nucleophile of the active site. Residue 199-204 (GAGETI) coordinates NADP(+).

The protein belongs to the glutamyl-tRNA reductase family. Homodimer.

The enzyme catalyses (S)-4-amino-5-oxopentanoate + tRNA(Glu) + NADP(+) = L-glutamyl-tRNA(Glu) + NADPH + H(+). It functions in the pathway porphyrin-containing compound metabolism; protoporphyrin-IX biosynthesis; 5-aminolevulinate from L-glutamyl-tRNA(Glu): step 1/2. Catalyzes the NADPH-dependent reduction of glutamyl-tRNA(Glu) to glutamate 1-semialdehyde (GSA). The sequence is that of Glutamyl-tRNA reductase from Pasteurella multocida (strain Pm70).